Reading from the N-terminus, the 914-residue chain is Probable dipeptidyl-aminopeptidase B (914 aa).

Residues 1-82 are disordered; sequence MGAEKRINDE…GLPPPSGAQR (82 aa). The Cytoplasmic portion of the chain corresponds to 1-88; sequence MGAEKRINDE…GAQRTPKKVS (88 aa). The segment covering 26-38 has biased composition (low complexity); sequence DSTSTASISLALI. A helical; Signal-anchor for type II membrane protein transmembrane segment spans residues 89 to 109; the sequence is IIFWLVAALCVGGWLVAFFVF. The Vacuolar segment spans residues 110–914; the sequence is MGSPKKDSDK…RSLLKRMSNA (805 aa). Residues Asn128, Asn295, Asn347, and Asn617 are each glycosylated (N-linked (GlcNAc...) asparagine). Ser751 acts as the Charge relay system in catalysis. The N-linked (GlcNAc...) asparagine glycan is linked to Asn810. Residues Asp828 and His861 each act as charge relay system in the active site. N-linked (GlcNAc...) asparagine glycosylation is present at Asn897.

Belongs to the peptidase S9B family.

It localises to the vacuole membrane. The enzyme catalyses Release of an N-terminal dipeptide, Xaa-Yaa-|-Zaa-, from a polypeptide, preferentially when Yaa is Pro, provided Zaa is neither Pro nor hydroxyproline.. Functionally, type IV dipeptidyl-peptidase which removes N-terminal dipeptides sequentially from polypeptides having unsubstituted N-termini provided that the penultimate residue is proline. The sequence is that of Probable dipeptidyl-aminopeptidase B (DAPB) from Uncinocarpus reesii (strain UAMH 1704).